A 342-amino-acid polypeptide reads, in one-letter code: UDP-N-acetylglucosamine transporter YEA4 (342 aa).

Over 1 to 6 (MWNSLK) the chain is Cytoplasmic. The helical transmembrane segment at 7-27 (AFALVFGGCCSNVITFETLMS) threads the bilayer. The Lumenal segment spans residues 28 to 35 (NETGSINN). Residues 36–56 (LITFCQFLFVTCQGLPEFLDV) form a helical membrane-spanning segment. Over 57 to 61 (HQPFP) the chain is Cytoplasmic. A helical transmembrane segment spans residues 62-82 (YFKPLKTPLHVYVITVVLFYI). At 83-96 (SSTTNNNVFKYNIS) the chain is on the lumenal side. Residues 97–117 (IPIHIVFRCFGTVITMFTCWL) traverse the membrane as a helical segment. Residues 118 to 123 (LNGRKY) are Cytoplasmic-facing. Residues 124–144 (TKIQILSTLFLTIGAIIASLF) traverse the membrane as a helical segment. Over 145–168 (KDADFRYQDLKLQAWKIGSDQSVD) the chain is Lumenal. The helical transmembrane segment at 169–189 (LTFIFGICILVLSSFTSSLLS) threads the bilayer. Topologically, residues 190-253 (AYNERTYQKY…GGKILVPREE (64 aa)) are cytoplasmic. Residues 254–274 (TLLLFNVLTQYFCVKGVNILA) traverse the membrane as a helical segment. Over 275–307 (SKTNALTLSITLLVRKFISLLLSVRLFDNNLSY) the chain is Lumenal. A helical transmembrane segment spans residues 308-328 (TGYIGVYLVFFGAFIYSLGSI). Topologically, residues 329 to 342 (HPRQNDKGAIKKSK) are cytoplasmic.

The protein belongs to the nucleotide-sugar transporter family. SLC35B subfamily.

The protein resides in the endoplasmic reticulum. The protein localises to the endoplasmic reticulum membrane. Functionally, sugar transporter that specifically mediates the transport of UDP-N-acetylglucosamine (UDP-GlcNAc) and is required for cell wall chitin synthesis. In Saccharomyces cerevisiae (strain ATCC 204508 / S288c) (Baker's yeast), this protein is UDP-N-acetylglucosamine transporter YEA4 (YEA4).